Here is a 159-residue protein sequence, read N- to C-terminus: Transmembrane protein 92 (159 aa).

An N-terminal signal peptide occupies residues M1–A26. At K27–R57 the chain is on the extracellular side. The chain crosses the membrane as a helical span at residues I58–C78. The Cytoplasmic portion of the chain corresponds to F79–F159. The disordered stretch occupies residues E122 to F159.

Its subcellular location is the membrane. The polypeptide is Transmembrane protein 92 (TMEM92) (Homo sapiens (Human)).